The primary structure comprises 427 residues: Gamma-glutamyl phosphate reductase (427 aa).

Belongs to the gamma-glutamyl phosphate reductase family.

Its subcellular location is the cytoplasm. The enzyme catalyses L-glutamate 5-semialdehyde + phosphate + NADP(+) = L-glutamyl 5-phosphate + NADPH + H(+). Its pathway is amino-acid biosynthesis; L-proline biosynthesis; L-glutamate 5-semialdehyde from L-glutamate: step 2/2. Functionally, catalyzes the NADPH-dependent reduction of L-glutamate 5-phosphate into L-glutamate 5-semialdehyde and phosphate. The product spontaneously undergoes cyclization to form 1-pyrroline-5-carboxylate. This is Gamma-glutamyl phosphate reductase from Rhizobium etli (strain CIAT 652).